We begin with the raw amino-acid sequence, 327 residues long: Sphingomyelin synthase-related 2 (327 aa).

Transmembrane regions (helical) follow at residues 54-74 (LLAT…LAWV), 99-119 (AIRI…LVMF), 131-151 (VFFC…IFQV), 192-212 (LCGD…FLVF), and 220-240 (LQPL…SILL). Histidine 201 is a catalytic residue. The Cytoplasmic portion of the chain corresponds to 241–327 (ARKHYMIDIV…TLKKSRRSFE (87 aa)). Residues histidine 244 and aspartate 248 contribute to the active site.

Belongs to the sphingomyelin synthase family.

It localises to the membrane. This Caenorhabditis elegans protein is Sphingomyelin synthase-related 2.